Here is a 981-residue protein sequence, read N- to C-terminus: DNA ligase 4 (981 aa).

ATP-binding residues include glutamate 320, lysine 322, arginine 327, glutamate 380, phenylalanine 424, glutamate 484, lysine 489, lysine 506, and lysine 508. Lysine 322 acts as the N6-AMP-lysine intermediate in catalysis. Position 380 (glutamate 380) interacts with Mg(2+). Glutamate 484 lines the Mg(2+) pocket. The interval 544-563 is disordered; the sequence is SEKNNPSSYESGSDSDSDSE. BRCT domains follow at residues 721 to 819 and 875 to 980; these read SKAD…PKYV and ERLL…EYAA.

It belongs to the ATP-dependent DNA ligase family. It depends on Mg(2+) as a cofactor.

It localises to the nucleus. It catalyses the reaction ATP + (deoxyribonucleotide)n-3'-hydroxyl + 5'-phospho-(deoxyribonucleotide)m = (deoxyribonucleotide)n+m + AMP + diphosphate.. Its function is as follows. DNA ligase involved in DNA non-homologous end joining (NHEJ); required for double-strand break (DSB) repair. The polypeptide is DNA ligase 4 (LIG4) (Eremothecium gossypii (strain ATCC 10895 / CBS 109.51 / FGSC 9923 / NRRL Y-1056) (Yeast)).